Consider the following 388-residue polypeptide: MLTMLTDRIDSQLVLSRLPRSRFQRFWETPTLIMKEESASSSGSIILAEKSVNMRYCVRFASDSDFQTTFTLPQSTEEKYDKEQHPGEDEASSPLPSPLKVPYKWMPSSFIVKQCHTQLAFYNKHIIWLSRERKVPTSLGVSLYIPEGFFGITFYKCLDAQFVCMPELLESRLQVPQLDVVNLNDTFQSIFPGTIEGDIGVFPCFVPEPWQLMNLPPPNEHRFFSLRTRQTLVIGPGHTQTVYFDAAYVHAPGICALIVGVRQFSQSDLIIRPTIWLPGTAAGVTVVNTSHTTVCISPHTTVAKAVFTTHRFTYLPVGSHPLGQMIVPPTPDIGFTHTPEHALLQRTPSPVDDDVDETEEDEKSSDAESPVNTNDVIFDVGPKPPRHP.

The span at 77 to 88 (EEKYDKEQHPGE) shows a compositional bias: basic and acidic residues. 2 disordered regions span residues 77 to 96 (EEKY…SPLP) and 336 to 388 (THTP…PRHP). The segment covering 351-363 (VDDDVDETEEDEK) has biased composition (acidic residues).

The protein belongs to the dUTPase family. Mg(2+) is required as a cofactor.

The protein localises to the virion. It catalyses the reaction dUTP + H2O = dUMP + diphosphate + H(+). Its pathway is pyrimidine metabolism; dUMP biosynthesis; dUMP from dCTP (dUTP route): step 2/2. Functionally, involved in nucleotide metabolism: produces dUMP, the immediate precursor of thymidine nucleotides and decreases the intracellular concentration of dUTP to avoid uracil incorporation into viral DNA. The chain is Deoxyuridine 5'-triphosphate nucleotidohydrolase from Human cytomegalovirus (strain AD169) (HHV-5).